A 616-amino-acid chain; its full sequence is MPKYRSATTTHGRNMAGARALWRATGMTDDDFGKPIIAVVNSFTQFVPGHVHLRDLGKLVAEQIEASGGVAKEFNTIAVDDGIAMGHGGMLYSLPSRELIADSVEYMVNAHCADAMVCISNCDKITPGMLMASLRLNIPVIFVSGGPMEAGKTKLSDKIIKLDLIDAMIQGANPNVSDADSAQIERSACPTCGSCSGMFTANSMNCLTEALGLSQPGNGSLLATHADRKDLFLNAGKRIVALTKRYYEQDDESALPRSIANKAAFENAMTLDIAMGGSTNTVLHLLAAAQEGEIDFTMEDIDRLSRKVPHLCKVAPSTQKYHMEDVHRAGGVLAILGELDRAGLMNRDVDNILGLKLTETLNQYDIMLTQDEAVKKMFRAGPAGIRTTQAFSQDCRWDTLDDDRAEGCIRSLENAFSLEGGLAVLYGNMALDGSIVKTAGVDKDNLTFRGPAKVYESQDTAVEAILGGKVVAGDVVVIRYEGPKGGPGMQEMLYPTTYLKSMGLGKACALITDGRFSGGTSGLSIGHVSPEAGSGGLIALIEDGDMIDIDIPKRSMVLDVSDSELAARREVELARGDRAWTPKNRERQVSFALRAYATLATSADKGAVRDKSKLGG.

Mg(2+) is bound at residue D81. [2Fe-2S] cluster is bound at residue C122. The Mg(2+) site is built by D123 and K124. K124 is subject to N6-carboxylysine. C195 contributes to the [2Fe-2S] cluster binding site. Mg(2+) is bound at residue E491. S517 serves as the catalytic Proton acceptor.

It belongs to the IlvD/Edd family. As to quaternary structure, homodimer. Requires [2Fe-2S] cluster as cofactor. The cofactor is Mg(2+).

It carries out the reaction (2R)-2,3-dihydroxy-3-methylbutanoate = 3-methyl-2-oxobutanoate + H2O. It catalyses the reaction (2R,3R)-2,3-dihydroxy-3-methylpentanoate = (S)-3-methyl-2-oxopentanoate + H2O. It participates in amino-acid biosynthesis; L-isoleucine biosynthesis; L-isoleucine from 2-oxobutanoate: step 3/4. The protein operates within amino-acid biosynthesis; L-valine biosynthesis; L-valine from pyruvate: step 3/4. In terms of biological role, functions in the biosynthesis of branched-chain amino acids. Catalyzes the dehydration of (2R,3R)-2,3-dihydroxy-3-methylpentanoate (2,3-dihydroxy-3-methylvalerate) into 2-oxo-3-methylpentanoate (2-oxo-3-methylvalerate) and of (2R)-2,3-dihydroxy-3-methylbutanoate (2,3-dihydroxyisovalerate) into 2-oxo-3-methylbutanoate (2-oxoisovalerate), the penultimate precursor to L-isoleucine and L-valine, respectively. This is Dihydroxy-acid dehydratase from Serratia proteamaculans (strain 568).